The following is a 312-amino-acid chain: Olfactory receptor 2L13 (312 aa).

The Extracellular segment spans residues 1–24 (MEKWNHTSNDFILLGLLPPNQTGI). 2 N-linked (GlcNAc...) asparagine glycosylation sites follow: Asn-5 and Asn-20. Residues 25-48 (FLLCLIILIFFLASVGNSAMIHLI) form a helical membrane-spanning segment. Topologically, residues 49–56 (HVDPRLHT) are cytoplasmic. The chain crosses the membrane as a helical span at residues 57-78 (PMYFLLSQLSLMDLMYISTTVP). At 79–99 (KMAYNFLSGQKGISFLGCGVQ) the chain is on the extracellular side. A disulfide bond links Cys-96 and Cys-188. A helical transmembrane segment spans residues 100-119 (SFFFLTMACSEGLLLTSMAY). The Cytoplasmic segment spans residues 120–138 (DRYLAICHSLYYPIRMSKM). The chain crosses the membrane as a helical span at residues 139–157 (MCVKMIGGSWTLGSINSLA). Topologically, residues 158-194 (HTVFALHIPYCRSRAIDHFFCDVPAMLLLACTDTWVY) are extracellular. Residues 195 to 218 (EYMVFVSTSLFLLFPFIGITSSCG) traverse the membrane as a helical segment. Topologically, residues 219–235 (RVLFAVYHMHSKEGRKK) are cytoplasmic. A helical transmembrane segment spans residues 236-258 (AFTTISTHLTVVIFYYAPFVYTY). At 259 to 271 (LRPRNLRSPAEDK) the chain is on the extracellular side. The helical transmembrane segment at 272-291 (ILAVFYTILTPMLNPIIYSL) threads the bilayer. Residues 292–312 (RNKEVLGAMRRVFGIFSFLKE) lie on the Cytoplasmic side of the membrane.

Belongs to the G-protein coupled receptor 1 family.

It localises to the cell membrane. In terms of biological role, odorant receptor. This is Olfactory receptor 2L13 (OR2L13) from Homo sapiens (Human).